The primary structure comprises 413 residues: Serine/threonine transporter SstT (413 aa).

10 helical membrane-spanning segments follow: residues 18-38 (LSLV…ALFA), 52-72 (FVSA…MASI), 86-106 (ILFL…IASM), 119-139 (IAVS…LSVV), 145-165 (ALMN…GVAI), 196-216 (LGIF…ALIG), 221-241 (LAVL…LIVF), 292-312 (VSIP…ITVL), 320-340 (LGIA…AICA), and 360-380 (LFGI…IIGV).

It belongs to the dicarboxylate/amino acid:cation symporter (DAACS) (TC 2.A.23) family.

The protein localises to the cell inner membrane. It catalyses the reaction L-serine(in) + Na(+)(in) = L-serine(out) + Na(+)(out). The catalysed reaction is L-threonine(in) + Na(+)(in) = L-threonine(out) + Na(+)(out). In terms of biological role, involved in the import of serine and threonine into the cell, with the concomitant import of sodium (symport system). This Pseudomonas fluorescens (strain Pf0-1) protein is Serine/threonine transporter SstT.